Reading from the N-terminus, the 374-residue chain is Anhydro-N-acetylmuramic acid kinase (374 aa).

12-19 (GTSLDGVD) provides a ligand contact to ATP.

This sequence belongs to the anhydro-N-acetylmuramic acid kinase family.

The enzyme catalyses 1,6-anhydro-N-acetyl-beta-muramate + ATP + H2O = N-acetyl-D-muramate 6-phosphate + ADP + H(+). The protein operates within amino-sugar metabolism; 1,6-anhydro-N-acetylmuramate degradation. It participates in cell wall biogenesis; peptidoglycan recycling. Catalyzes the specific phosphorylation of 1,6-anhydro-N-acetylmuramic acid (anhMurNAc) with the simultaneous cleavage of the 1,6-anhydro ring, generating MurNAc-6-P. Is required for the utilization of anhMurNAc either imported from the medium or derived from its own cell wall murein, and thus plays a role in cell wall recycling. The polypeptide is Anhydro-N-acetylmuramic acid kinase (Salmonella arizonae (strain ATCC BAA-731 / CDC346-86 / RSK2980)).